Consider the following 1028-residue polypeptide: Contactin-3 (1028 aa).

The first 19 residues, 1–19, serve as a signal peptide directing secretion; the sequence is MMLSWKQLILLSFIGCLAG. 6 consecutive Ig-like C2-type domains span residues 26 to 117, 122 to 208, 227 to 313, 318 to 402, 408 to 497, and 499 to 593; these read PVFV…AKLQ, ENFK…ARVL, PKIE…GRLT, PYWV…AELK, PDFS…LVVT, and PTRI…AELI. 5 disulfides stabilise this stretch: C50–C100, C144–C196, C249–C297, C339–C386, and C431–C479. N-linked (GlcNAc...) asparagine glycosylation is found at N65 and N193. Residues N377, N468, N489, and N538 are each glycosylated (N-linked (GlcNAc...) asparagine). A disulfide bond links C521 and C577. 4 consecutive Fibronectin type-III domains span residues 600-698, 703-800, 805-901, and 902-998; these read PPEN…TEEA, APSE…SAEE, APSH…TKKT, and PPSQ…TSMD. Positions 684-714 are disordered; it reads GEPSLPSEKVRTEEAAPEVAPSEVSGGGGSR. N-linked (GlcNAc...) asparagine glycosylation is found at N765, N860, N895, N913, N931, and N956. Residue S1002 is the site of GPI-anchor amidated serine attachment. The propeptide at 1003–1028 is removed in mature form; sequence TSAISDIHPVSGYISVLLFFIVNALW.

This sequence belongs to the immunoglobulin superfamily. Contactin family. Interacts with PTPRG. As to expression, specifically expressed in brain. Not expressed in peripheral tissues such as heart, lung, liver, spleen, kidney and skeletal muscle. In brain, it is restricted to subsets of neurons such as Purkinje cells of the cerebellum, granule cells of the dentate gyrus, and neurons in the superficial layers of the cerebral cortex.

The protein resides in the cell membrane. Contactins mediate cell surface interactions during nervous system development. Has some neurite outgrowth-promoting activity. The sequence is that of Contactin-3 (Cntn3) from Rattus norvegicus (Rat).